The chain runs to 518 residues: Probable bifunctional methylthioribulose-1-phosphate dehydratase/enolase-phosphatase E1 (518 aa).

A methylthioribulose-1-phosphate dehydratase region spans residues 1–247 (MAAAPPAVAV…AIKLHQIGLD (247 aa)). Cysteine 119 provides a ligand contact to substrate. Zn(2+) is bound by residues histidine 137 and histidine 139. Glutamate 162 (proton donor/acceptor; for methylthioribulose-1-phosphate dehydratase activity) is an active-site residue. A Zn(2+)-binding site is contributed by histidine 212. The interval 279 to 518 (IVLDIEGTTT…FKTITSFAEI (240 aa)) is enolase-phosphatase E1. Residues aspartate 282 and glutamate 284 each coordinate Mg(2+). Substrate-binding positions include 417 to 418 (SS) and lysine 451. Aspartate 477 serves as a coordination point for Mg(2+).

It in the N-terminal section; belongs to the aldolase class II family. MtnB subfamily. This sequence in the C-terminal section; belongs to the HAD-like hydrolase superfamily. MasA/MtnC family. Zn(2+) is required as a cofactor. Requires Mg(2+) as cofactor.

It carries out the reaction 5-(methylsulfanyl)-D-ribulose 1-phosphate = 5-methylsulfanyl-2,3-dioxopentyl phosphate + H2O. It catalyses the reaction 5-methylsulfanyl-2,3-dioxopentyl phosphate + H2O = 1,2-dihydroxy-5-(methylsulfanyl)pent-1-en-3-one + phosphate. Its pathway is amino-acid biosynthesis; L-methionine biosynthesis via salvage pathway; L-methionine from S-methyl-5-thio-alpha-D-ribose 1-phosphate: step 2/6. It participates in amino-acid biosynthesis; L-methionine biosynthesis via salvage pathway; L-methionine from S-methyl-5-thio-alpha-D-ribose 1-phosphate: step 3/6. The protein operates within amino-acid biosynthesis; L-methionine biosynthesis via salvage pathway; L-methionine from S-methyl-5-thio-alpha-D-ribose 1-phosphate: step 4/6. This Populus trichocarpa (Western balsam poplar) protein is Probable bifunctional methylthioribulose-1-phosphate dehydratase/enolase-phosphatase E1.